A 446-amino-acid chain; its full sequence is MSDYLSVTSLTKYLKMKFDRDPYLERVYLTGQVSNYRRRPSHQYFSLKDEGAVIQATIWAGVFKKIGFDLEEGMKINVVGRVQIYEPSGSYSLIIEKAEPDGIGALALQFEQLRKKLTAEGYFDDRHKQPLPNFVKKIGVITSPSGAVIRDIITTVSRRFPGVEILLFPTKVQGDGAAQEIVENIQKANQREDLDLLIVGRGGGSIEDLWAFNEEIVVQSIFESRLPVISSVGHETDTTLADFVADRRAATPTAAAELATPISKADTLAWIRERQNRAYQACLRRIQYNQERLAKLSQSVVFRQPERLYDGYLQKLDHLTTRLETFMSQDFERKQKSAEFLRQRLHGLNLSTRVKNYQDRRESLQRLLVTTTKNTINGNRVRLEKAQDALLSLDTSRIVARGYAIVNKNDKPLTTIKDITEGEQLTIQMRDGQLEVEVKNVNEKNI.

This sequence belongs to the XseA family. In terms of assembly, heterooligomer composed of large and small subunits.

The protein resides in the cytoplasm. The enzyme catalyses Exonucleolytic cleavage in either 5'- to 3'- or 3'- to 5'-direction to yield nucleoside 5'-phosphates.. Functionally, bidirectionally degrades single-stranded DNA into large acid-insoluble oligonucleotides, which are then degraded further into small acid-soluble oligonucleotides. The chain is Exodeoxyribonuclease 7 large subunit from Streptococcus thermophilus (strain CNRZ 1066).